Reading from the N-terminus, the 252-residue chain is tRNA1(Val) (adenine(37)-N6)-methyltransferase (252 aa).

The protein belongs to the methyltransferase superfamily. tRNA (adenine-N(6)-)-methyltransferase family.

It localises to the cytoplasm. The catalysed reaction is adenosine(37) in tRNA1(Val) + S-adenosyl-L-methionine = N(6)-methyladenosine(37) in tRNA1(Val) + S-adenosyl-L-homocysteine + H(+). Functionally, specifically methylates the adenine in position 37 of tRNA(1)(Val) (anticodon cmo5UAC). This is tRNA1(Val) (adenine(37)-N6)-methyltransferase from Yersinia pseudotuberculosis serotype O:3 (strain YPIII).